The sequence spans 454 residues: Chaperone SurA (454 aa).

An N-terminal signal peptide occupies residues 1–28 (MKISSFRKGRWLGALALFAVVCWSMADA). PpiC domains lie at 177 to 278 (DREY…KMLA) and 287 to 386 (LTKT…QVLE). The segment at 431–454 (LDETPASPGEDAPAGEDSPETFMR) is disordered. A compositionally biased stretch (acidic residues) spans 443–454 (PAGEDSPETFMR).

It is found in the periplasm. The enzyme catalyses [protein]-peptidylproline (omega=180) = [protein]-peptidylproline (omega=0). Functionally, chaperone involved in the correct folding and assembly of outer membrane proteins. Recognizes specific patterns of aromatic residues and the orientation of their side chains, which are found more frequently in integral outer membrane proteins. May act in both early periplasmic and late outer membrane-associated steps of protein maturation. This Methylococcus capsulatus (strain ATCC 33009 / NCIMB 11132 / Bath) protein is Chaperone SurA.